We begin with the raw amino-acid sequence, 367 residues long: 2-aminoethylphosphonate--pyruvate transaminase (367 aa).

Position 194 is an N6-(pyridoxal phosphate)lysine (Lys-194).

This sequence belongs to the class-V pyridoxal-phosphate-dependent aminotransferase family. PhnW subfamily. In terms of assembly, homodimer. The cofactor is pyridoxal 5'-phosphate.

It catalyses the reaction (2-aminoethyl)phosphonate + pyruvate = phosphonoacetaldehyde + L-alanine. In terms of biological role, involved in phosphonate degradation. The chain is 2-aminoethylphosphonate--pyruvate transaminase from Salmonella agona (strain SL483).